A 515-amino-acid polypeptide reads, in one-letter code: 2,3-bisphosphoglycerate-independent phosphoglycerate mutase (515 aa).

Residues Asp-14 and Ser-64 each coordinate Mn(2+). Ser-64 (phosphoserine intermediate) is an active-site residue. Residues His-125, 155–156 (RD), Arg-187, Arg-193, 263–266 (RADR), and Lys-337 contribute to the substrate site. Residues Asp-404, His-408, Asp-445, His-446, and His-464 each contribute to the Mn(2+) site.

The protein belongs to the BPG-independent phosphoglycerate mutase family. As to quaternary structure, monomer. Mn(2+) serves as cofactor.

The catalysed reaction is (2R)-2-phosphoglycerate = (2R)-3-phosphoglycerate. It functions in the pathway carbohydrate degradation; glycolysis; pyruvate from D-glyceraldehyde 3-phosphate: step 3/5. Its function is as follows. Catalyzes the interconversion of 2-phosphoglycerate and 3-phosphoglycerate. This Yersinia pestis bv. Antiqua (strain Antiqua) protein is 2,3-bisphosphoglycerate-independent phosphoglycerate mutase.